A 184-amino-acid polypeptide reads, in one-letter code: ATP synthase subunit b, chloroplastic (184 aa).

Residues 27–49 (LATNLINLSVVLGVLIFFGKGVL) form a helical membrane-spanning segment.

Belongs to the ATPase B chain family. In terms of assembly, F-type ATPases have 2 components, F(1) - the catalytic core - and F(0) - the membrane proton channel. F(1) has five subunits: alpha(3), beta(3), gamma(1), delta(1), epsilon(1). F(0) has four main subunits: a(1), b(1), b'(1) and c(10-14). The alpha and beta chains form an alternating ring which encloses part of the gamma chain. F(1) is attached to F(0) by a central stalk formed by the gamma and epsilon chains, while a peripheral stalk is formed by the delta, b and b' chains.

Its subcellular location is the plastid. It localises to the chloroplast thylakoid membrane. Its function is as follows. F(1)F(0) ATP synthase produces ATP from ADP in the presence of a proton or sodium gradient. F-type ATPases consist of two structural domains, F(1) containing the extramembraneous catalytic core and F(0) containing the membrane proton channel, linked together by a central stalk and a peripheral stalk. During catalysis, ATP synthesis in the catalytic domain of F(1) is coupled via a rotary mechanism of the central stalk subunits to proton translocation. Functionally, component of the F(0) channel, it forms part of the peripheral stalk, linking F(1) to F(0). The sequence is that of ATP synthase subunit b, chloroplastic from Guizotia abyssinica (Niger).